Consider the following 216-residue polypeptide: Pyrophosphatase PpaX (216 aa).

Asp9 functions as the Nucleophile in the catalytic mechanism.

Belongs to the HAD-like hydrolase superfamily. PpaX family. The cofactor is Mg(2+).

It carries out the reaction diphosphate + H2O = 2 phosphate + H(+). In terms of biological role, hydrolyzes pyrophosphate formed during P-Ser-HPr dephosphorylation by HPrK/P. Might play a role in controlling the intracellular pyrophosphate pool. This chain is Pyrophosphatase PpaX, found in Bacillus anthracis (strain CDC 684 / NRRL 3495).